The sequence spans 102 residues: Type IV secretion system protein PtlA homolog (102 aa).

The N-terminal stretch at 1–33 (MNPLKDLRASLPRLAFMAACTLLSATLPDLAQA) is a signal peptide. 2 helical membrane passes run 47 to 67 (IVVVLRGASVATVTIAIIWAG) and 77 to 97 (VLDVVRVVLAGLLIGASAEIA).

Belongs to the PtlA family.

The protein localises to the cell membrane. This is Type IV secretion system protein PtlA homolog (ptlA) from Bordetella parapertussis (strain 12822 / ATCC BAA-587 / NCTC 13253).